The chain runs to 228 residues: Urease accessory protein UreF (228 aa).

The protein belongs to the UreF family. As to quaternary structure, ureD, UreF and UreG form a complex that acts as a GTP-hydrolysis-dependent molecular chaperone, activating the urease apoprotein by helping to assemble the nickel containing metallocenter of UreC. The UreE protein probably delivers the nickel.

The protein resides in the cytoplasm. Functionally, required for maturation of urease via the functional incorporation of the urease nickel metallocenter. In Yersinia pseudotuberculosis serotype IB (strain PB1/+), this protein is Urease accessory protein UreF.